Reading from the N-terminus, the 670-residue chain is Sodium/potassium/calcium exchanger 2 (670 aa).

The Cytoplasmic segment spans residues 1-38 (MDLHQSATVRLLQEWCSHESPSGCRRHYNTRKKLKLIR). Residues 39 to 59 (VIGLVMGLVAVSTVPFSISAF) form a helical membrane-spanning segment. Residues 60 to 133 (TETYSQNNRG…DVFSLEERRK (74 aa)) lie on the Extracellular side of the membrane. Disordered stretches follow at residues 67-86 (NRGEASDVTGPRAAPGHRQR) and 91-122 (LNDKIRDYTPQPPASQEDRSENGTDHAQGDYP). Over residues 106-122 (QEDRSENGTDHAQGDYP) the composition is skewed to basic and acidic residues. Residue Asn112 is glycosylated (N-linked (GlcNAc...) asparagine). Residues 134-154 (GAIILHVIGMIYMFIALAIVC) form a helical membrane-spanning segment. Topologically, residues 155 to 179 (DEFFVPSLTVITEKLGISDDVAGAT) are cytoplasmic. An Alpha-1 repeat occupies 175-215 (VAGATFMAAGGSAPELFTSLIGVFIAHSNVGIGTIVGSAVF). The helical transmembrane segment at 180–200 (FMAAGGSAPELFTSLIGVFIA) threads the bilayer. Over 201 to 205 (HSNVG) the chain is Extracellular. A helical membrane pass occupies residues 206–226 (IGTIVGSAVFNILFVIGMCAL). At 227 to 244 (FSREILNLTWWPLFRDVS) the chain is on the cytoplasmic side. The helical transmembrane segment at 245-265 (FYIVDLIMLIIFFLDNVIMWW) threads the bilayer. Residue Glu266 is a topological domain, extracellular. A helical membrane pass occupies residues 267–287 (SLLLLTAYFAYVVFMKFNVQV). The Cytoplasmic segment spans residues 288–506 (ERWVKQMINR…PDVRKPASKK (219 aa)). Residues 312–335 (ASTAGDKEEPTLPNKPRLQRGGSS) form a disordered region. Ser337 and Ser341 each carry phosphoserine. Disordered regions lie at residues 394–414 (KCQVDENERQNGAANHVDYAA) and 450–471 (AADAPQATETAEEDDDQPLSLS). Residues 507 to 527 (FFPITFFGSITWIAVFSYLMV) traverse the membrane as a helical segment. Residues 528–542 (WWAHQVGETIGISEE) lie on the Extracellular side of the membrane. The helical transmembrane segment at 543–563 (IMGLTILAAGTSIPDLITSVI) threads the bilayer. The stretch at 550–581 (AAGTSIPDLITSVIVARKGLGDMAVSSSVGSN) is one Alpha-2 repeat. At 564 to 578 (VARKGLGDMAVSSSV) the chain is on the cytoplasmic side. Residues 579–599 (GSNIFDITVGLPLPWLLYTII) form a helical membrane-spanning segment. Topologically, residues 600-611 (HRFKPVTVSSNG) are extracellular. Residues 612-632 (LFCAIVLLFIMLIFVILSIAL) form a helical membrane-spanning segment. At 633–639 (CKWRMNK) the chain is on the cytoplasmic side. Residues 640 to 660 (ILGFIMFGLYFAFLVVSVLLE) form a helical membrane-spanning segment. At 661–670 (DKVLECPVSI) the chain is on the extracellular side.

Belongs to the Ca(2+):cation antiporter (CaCA) (TC 2.A.19) family. SLC24A subfamily. Expressed abundantly in all regions of the brain and weakly in the eye, large intestine and adrenal tissue.

It localises to the cell membrane. The enzyme catalyses Ca(2+)(out) + K(+)(out) + 4 Na(+)(in) = Ca(2+)(in) + K(+)(in) + 4 Na(+)(out). In terms of biological role, calcium, potassium:sodium antiporter that transports 1 Ca(2+) and 1 K(+) in exchange for 4 Na(+). Required for learming and memory by regulating neuronal Ca(2+), which is essential for the development of synaptic plasticity. In Rattus norvegicus (Rat), this protein is Sodium/potassium/calcium exchanger 2 (Slc24a2).